Here is a 247-residue protein sequence, read N- to C-terminus: Exosome complex component Rrp4 (247 aa).

In terms of domain architecture, S1 motif spans 70-143; it reads GDTVIGLIED…INPILSIKGK (74 aa). In terms of domain architecture, KH spans 149 to 211; that stretch reads SSGIVIDIPP…EALVEAIQII (63 aa).

This sequence belongs to the RRP4 family. In terms of assembly, component of the archaeal exosome complex. Forms a trimer of Rrp4 and/or Csl4 subunits. The trimer associates with a hexameric ring-like arrangement composed of 3 Rrp41-Rrp42 heterodimers.

It localises to the cytoplasm. Non-catalytic component of the exosome, which is a complex involved in RNA degradation. Increases the RNA binding and the efficiency of RNA degradation. Confers strong poly(A) specificity to the exosome. This Sulfurisphaera tokodaii (strain DSM 16993 / JCM 10545 / NBRC 100140 / 7) (Sulfolobus tokodaii) protein is Exosome complex component Rrp4.